Consider the following 331-residue polypeptide: 6-phosphogluconolactonase (331 aa).

Lys287 is subject to N6-acetyllysine.

Belongs to the cycloisomerase 2 family.

The catalysed reaction is 6-phospho-D-glucono-1,5-lactone + H2O = 6-phospho-D-gluconate + H(+). Its pathway is carbohydrate degradation; pentose phosphate pathway; D-ribulose 5-phosphate from D-glucose 6-phosphate (oxidative stage): step 2/3. In terms of biological role, catalyzes the hydrolysis of 6-phosphogluconolactone to 6-phosphogluconate. The chain is 6-phosphogluconolactonase from Escherichia coli (strain SMS-3-5 / SECEC).